Reading from the N-terminus, the 125-residue chain is Prefoldin subunit beta (125 aa).

Belongs to the prefoldin subunit beta family. Heterohexamer of two alpha and four beta subunits.

It localises to the cytoplasm. Its function is as follows. Molecular chaperone capable of stabilizing a range of proteins. Seems to fulfill an ATP-independent, HSP70-like function in archaeal de novo protein folding. The protein is Prefoldin subunit beta (pfdB) of Sulfurisphaera tokodaii (strain DSM 16993 / JCM 10545 / NBRC 100140 / 7) (Sulfolobus tokodaii).